The chain runs to 94 residues: Small ribosomal subunit protein uS19 (94 aa).

It belongs to the universal ribosomal protein uS19 family.

Functionally, protein S19 forms a complex with S13 that binds strongly to the 16S ribosomal RNA. In Desulforudis audaxviator (strain MP104C), this protein is Small ribosomal subunit protein uS19.